The sequence spans 570 residues: Proline--tRNA ligase (570 aa).

This sequence belongs to the class-II aminoacyl-tRNA synthetase family. ProS type 1 subfamily. As to quaternary structure, homodimer.

The protein localises to the cytoplasm. It catalyses the reaction tRNA(Pro) + L-proline + ATP = L-prolyl-tRNA(Pro) + AMP + diphosphate. Catalyzes the attachment of proline to tRNA(Pro) in a two-step reaction: proline is first activated by ATP to form Pro-AMP and then transferred to the acceptor end of tRNA(Pro). As ProRS can inadvertently accommodate and process non-cognate amino acids such as alanine and cysteine, to avoid such errors it has two additional distinct editing activities against alanine. One activity is designated as 'pretransfer' editing and involves the tRNA(Pro)-independent hydrolysis of activated Ala-AMP. The other activity is designated 'posttransfer' editing and involves deacylation of mischarged Ala-tRNA(Pro). The misacylated Cys-tRNA(Pro) is not edited by ProRS. This chain is Proline--tRNA ligase, found in Clostridium tetani (strain Massachusetts / E88).